A 1362-amino-acid chain; its full sequence is DNA-directed RNA polymerase subunit beta'' (1362 aa).

Zn(2+)-binding residues include Cys224, Cys295, Cys302, and Cys305.

Belongs to the RNA polymerase beta' chain family. RpoC2 subfamily. As to quaternary structure, in plastids the minimal PEP RNA polymerase catalytic core is composed of four subunits: alpha, beta, beta', and beta''. When a (nuclear-encoded) sigma factor is associated with the core the holoenzyme is formed, which can initiate transcription. Requires Zn(2+) as cofactor.

The protein localises to the plastid. Its subcellular location is the chloroplast. It carries out the reaction RNA(n) + a ribonucleoside 5'-triphosphate = RNA(n+1) + diphosphate. In terms of biological role, DNA-dependent RNA polymerase catalyzes the transcription of DNA into RNA using the four ribonucleoside triphosphates as substrates. In Helianthus annuus (Common sunflower), this protein is DNA-directed RNA polymerase subunit beta''.